The sequence spans 868 residues: B-cell receptor CD22 (868 aa).

The signal sequence occupies residues 1-21 (MRVHYLWLLLILGHVASARYS). One can recognise an Ig-like V-type domain in the interval 22–148 (SANDWTVDHP…MEPIHLNVSE (127 aa)). The Extracellular segment spans residues 22–708 (SANDWTVDHP…YYSPETIGKR (687 aa)). 3 cysteine pairs are disulfide-bonded: C41/C177, C46/C112, and C171/C235. 2 N-linked (GlcNAc...) asparagine glycosylation sites follow: N111 and N122. R130 lines the N-acetylneuraminate pocket. 9 N-linked (GlcNAc...) asparagine glycosylation sites follow: N145, N174, N271, N281, N384, N414, N466, N567, and N595. Ig-like C2-type domains follow at residues 153 to 250 (PYIQ…RTVR), 257 to 347 (PKLE…VELT), 352 to 435 (PEPS…AKLD), 440 to 521 (PKAV…VILN), 526 to 603 (PRDV…ETLS), and 614 to 697 (PRRL…STLT). Intrachain disulfides connect C278–C330, C374–C417, C463–C505, and C550–C592. A disulfide bond links C637 and C680. Residues 709 to 727 (VALGLGFCLTICILAIWGM) traverse the membrane as a helical segment. The Cytoplasmic portion of the chain corresponds to 728 to 868 (KIQKKWKQNR…EDVDYVTLKH (141 aa)). The span at 738–752 (SQQGLQENSSGQSFF) shows a compositional bias: polar residues. Positions 738 to 772 (SQQGLQENSSGQSFFVRNKKARRTPLSEGPQSQGC) are disordered. A phosphoserine mark is found at S746, S747, and S750. Residues 781–786 (VSYAIL) carry the ITIM motif 1 motif. A Phosphotyrosine modification is found at Y783. Residues 790–812 (ESDTHNTGDAGTPATQAPPPNNS) form a disordered region. A phosphotyrosine mark is found at Y828, Y843, and Y863. 2 short sequence motifs (ITIM motif) span residues 841-846 (IHYSEL) and 861-866 (VDYVTL).

This sequence belongs to the immunoglobulin superfamily. SIGLEC (sialic acid binding Ig-like lectin) family. As to quaternary structure, predominantly monomer of isoform CD22-beta. Also found as heterodimer of isoform CD22-beta and a shorter isoform. Interacts with PTPN6/SHP-1, LYN, SYK, PIK3R1/PIK3R2 and PLCG1 upon phosphorylation. Interacts with GRB2, INPP5D and SHC1 upon phosphorylation. May form a complex with INPP5D/SHIP, GRB2 and SHC1. Phosphorylated on tyrosine residues by LYN. In terms of processing, phosphorylation of Tyr-783 and Tyr-843 are involved in binding to SYK. Phosphorylation of Tyr-828 is involved in binding to GRB2. Phosphorylation of Tyr-863 is involved in binding to SYK, PLCG2 and PIK3R1/PIK3R2. As to expression, B-lymphocytes.

The protein resides in the cell membrane. Functionally, most highly expressed siglec (sialic acid-binding immunoglobulin-like lectin) on B-cells that plays a role in various aspects of B-cell biology including differentiation, antigen presentation, and trafficking to bone marrow. Binds to alpha 2,6-linked sialic acid residues of surface molecules such as CD22 itself, CD45 and IgM in a cis configuration. Can also bind to ligands on other cells as an adhesion molecule in a trans configuration. Acts as an inhibitory coreceptor on the surface of B-cells and inhibits B-cell receptor induced signaling, characterized by inhibition of the calcium mobilization and cellular activation. Mechanistically, the immunoreceptor tyrosine-based inhibitory motif domain is phosphorylated by the Src kinase LYN, which in turn leads to the recruitment of the protein tyrosine phosphatase 1/PTPN6, leading to the negative regulation of BCR signaling. If this negative signaling from is of sufficient strength, apoptosis of the B-cell can be induced. This Mus musculus (Mouse) protein is B-cell receptor CD22.